Consider the following 485-residue polypeptide: Protein DETOXIFICATION 8 (485 aa).

A disordered region spans residues 1–26 (MENGFSLVPKEEEEEEDYSNEKSEDQ). A run of 12 helical transmembrane segments spans residues 41–61 (FMAA…VISI), 74–94 (AVAI…FGLA), 118–138 (YGSM…WVFM), 159–179 (SIWL…TRFF), 188–208 (LFLS…LLVY), 212–232 (FGIV…VGLL), 263–283 (LAIP…LLIL), 297–317 (VLSI…AIGA), 338–358 (AANS…ISLY), 381–401 (ITPF…LSGV), 414–434 (ANIG…CFVV), and 442–462 (WIGI…VTFF).

The protein belongs to the multi antimicrobial extrusion (MATE) (TC 2.A.66.1) family.

Its subcellular location is the membrane. In Arabidopsis thaliana (Mouse-ear cress), this protein is Protein DETOXIFICATION 8.